Consider the following 443-residue polypeptide: Phosphoglucosamine mutase (443 aa).

Serine 101 acts as the Phosphoserine intermediate in catalysis. Mg(2+) is bound by residues serine 101, aspartate 240, aspartate 242, and aspartate 244. Serine 101 is modified (phosphoserine).

Belongs to the phosphohexose mutase family. Mg(2+) serves as cofactor. Activated by phosphorylation.

It carries out the reaction alpha-D-glucosamine 1-phosphate = D-glucosamine 6-phosphate. Functionally, catalyzes the conversion of glucosamine-6-phosphate to glucosamine-1-phosphate. This Psychromonas ingrahamii (strain DSM 17664 / CCUG 51855 / 37) protein is Phosphoglucosamine mutase.